A 302-amino-acid chain; its full sequence is 4-hydroxy-tetrahydrodipicolinate synthase (302 aa).

A pyruvate-binding site is contributed by Thr-46. Tyr-135 (proton donor/acceptor) is an active-site residue. Lys-164 serves as the catalytic Schiff-base intermediate with substrate. Position 206 (Val-206) interacts with pyruvate.

Belongs to the DapA family. In terms of assembly, homotetramer; dimer of dimers.

It localises to the cytoplasm. The catalysed reaction is L-aspartate 4-semialdehyde + pyruvate = (2S,4S)-4-hydroxy-2,3,4,5-tetrahydrodipicolinate + H2O + H(+). It functions in the pathway amino-acid biosynthesis; L-lysine biosynthesis via DAP pathway; (S)-tetrahydrodipicolinate from L-aspartate: step 3/4. Its function is as follows. Catalyzes the condensation of (S)-aspartate-beta-semialdehyde [(S)-ASA] and pyruvate to 4-hydroxy-tetrahydrodipicolinate (HTPA). This chain is 4-hydroxy-tetrahydrodipicolinate synthase, found in Acidobacterium capsulatum (strain ATCC 51196 / DSM 11244 / BCRC 80197 / JCM 7670 / NBRC 15755 / NCIMB 13165 / 161).